The sequence spans 98 residues: Aspartyl/glutamyl-tRNA(Asn/Gln) amidotransferase subunit C (98 aa).

The disordered stretch occupies residues 75 to 98 (EQALSGAPDSDDNRFKVPAILDEA).

The protein belongs to the GatC family. In terms of assembly, heterotrimer of A, B and C subunits.

It carries out the reaction L-glutamyl-tRNA(Gln) + L-glutamine + ATP + H2O = L-glutaminyl-tRNA(Gln) + L-glutamate + ADP + phosphate + H(+). The enzyme catalyses L-aspartyl-tRNA(Asn) + L-glutamine + ATP + H2O = L-asparaginyl-tRNA(Asn) + L-glutamate + ADP + phosphate + 2 H(+). Allows the formation of correctly charged Asn-tRNA(Asn) or Gln-tRNA(Gln) through the transamidation of misacylated Asp-tRNA(Asn) or Glu-tRNA(Gln) in organisms which lack either or both of asparaginyl-tRNA or glutaminyl-tRNA synthetases. The reaction takes place in the presence of glutamine and ATP through an activated phospho-Asp-tRNA(Asn) or phospho-Glu-tRNA(Gln). In Pseudarthrobacter chlorophenolicus (strain ATCC 700700 / DSM 12829 / CIP 107037 / JCM 12360 / KCTC 9906 / NCIMB 13794 / A6) (Arthrobacter chlorophenolicus), this protein is Aspartyl/glutamyl-tRNA(Asn/Gln) amidotransferase subunit C.